Reading from the N-terminus, the 388-residue chain is Nesprin-4 (388 aa).

The Cytoplasmic segment spans residues Met-1–Pro-339. A disordered region spans residues Glu-60 to Asp-92. The span at Ser-78–Asp-92 shows a compositional bias: basic and acidic residues. A KASH domain is found at Val-331 to Ile-388. The chain crosses the membrane as a helical; Anchor for type IV membrane protein span at residues Leu-340–Leu-360. Residues Ser-361–Ile-388 are Perinuclear space-facing.

This sequence belongs to the nesprin family. Core component of LINC complexes which are composed of inner nuclear membrane SUN domain-containing proteins coupled to outer nuclear membrane KASH domain-containing nesprins. SUN and KASH domain-containing proteins seem to bind each other promiscuously; however, differentially expression of LINC complex constituents can give rise to specific assemblies. Probably part of a SUN1-containing LINC complex. Interacts with kinesins KIF5B and KLC1. The disulfid bond with SUN1 or SUN2 is required for stability of the respective LINC complex under tensile forces. In terms of tissue distribution, expressed in secretory epithelial cells, such as those found in exocrine pancreas, bulbourethral gland, mammary gland and salivary gland (at protein level). Also expressed in the cochlea, where it is restricted primarily to the 3 rows of outer hair cells and 1 row of inner hair cells (at protein level). Not detected in other cells of the cochlea, including Deiter's cells and pillar cells, nor in liver and kidney (at protein level).

It localises to the nucleus outer membrane. In terms of biological role, as a component of the LINC (LInker of Nucleoskeleton and Cytoskeleton) complex, involved in the connection between the nuclear lamina and the cytoskeleton. The nucleocytoplasmic interactions established by the LINC complex play an important role in the transmission of mechanical forces across the nuclear envelope and in nuclear movement and positioning. Behaves as a kinesin cargo, providing a functional binding site for kinesin-1 at the nuclear envelope. Hence may contribute to the establishment of secretory epithelial morphology, by promoting kinesin-dependent apical migration of the centrosome and Golgi apparatus and basal localization of the nucleus. The polypeptide is Nesprin-4 (Syne4) (Mus musculus (Mouse)).